Here is a 296-residue protein sequence, read N- to C-terminus: tRNA uridine(34) hydroxylase (296 aa).

The Rhodanese domain maps to Ala-132 to Tyr-226. Cys-186 serves as the catalytic Cysteine persulfide intermediate.

This sequence belongs to the TrhO family.

It carries out the reaction uridine(34) in tRNA + AH2 + O2 = 5-hydroxyuridine(34) in tRNA + A + H2O. Functionally, catalyzes oxygen-dependent 5-hydroxyuridine (ho5U) modification at position 34 in tRNAs. The polypeptide is tRNA uridine(34) hydroxylase (Burkholderia thailandensis (strain ATCC 700388 / DSM 13276 / CCUG 48851 / CIP 106301 / E264)).